Reading from the N-terminus, the 425-residue chain is MKPMHIAMALFSAAMFFVLAGVFMGVQLELDGTKLVVDTAADIRWQWIFIGTAVVFFFQLLRPMFQKAVKHVSGPKFILPAIDGSTVKQKLFLMALLVIAVAWPFMVSRGSVDIATMTMIYIILGLGLNVVVGLSGLLVLGYGGFYAIGAYTFALLNHYYGLGFWTCLPLAGLVSAAAGFLLGFPVLRLRGDYLAIVTLGFGEIVRILLLNNTEITGGPNGISQIPKPTLFGLEFSRSTREGGWDTFSNFFGVKYDPSDRVIFLYLVALLLVVLSLFVINRLLRMPLGRAWEALREDEIACRSLGLSPTRIKLTAFTISAAFAGFAGTLFAARQGFVSPESFTFAESAFVLAIVVLGGMGSQFAVILAAVLLVVSRELMRDFNEYSMLMLGGLMVLMMIWRPQGLLPMTRPQLKLKSGQAKGEQA.

Helical transmembrane passes span 6 to 26 (IAMA…FMGV), 45 to 65 (WQWI…RPMF), 92 to 112 (FLMA…RGSV), 120 to 140 (IYII…LLVL), 145 to 165 (FYAI…LGFW), 167 to 187 (CLPL…FPVL), 191 to 211 (GDYL…LLLN), 260 to 280 (RVIF…FVIN), 311 to 331 (IKLT…TLFA), 353 to 373 (IVVL…VLLV), and 388 to 408 (LMLG…LLPM).

Belongs to the binding-protein-dependent transport system permease family. LivHM subfamily.

Its subcellular location is the cell inner membrane. Functionally, part of the binding-protein-dependent transport system for branched-chain amino acids. Probably responsible for the translocation of the substrates across the membrane. This is High-affinity branched-chain amino acid transport system permease protein LivM (livM) from Salmonella typhimurium (strain LT2 / SGSC1412 / ATCC 700720).